We begin with the raw amino-acid sequence, 1713 residues long: Serine/threonine-protein kinase MRCK beta (1713 aa).

Residues phenylalanine 76–phenylalanine 342 form the Protein kinase domain. ATP contacts are provided by residues isoleucine 82–valine 90 and lysine 105. The active-site Proton acceptor is aspartate 200. Phosphoserine; by autocatalysis occurs at positions 221 and 233. Residue threonine 239 is modified to Phosphothreonine; by autocatalysis. An AGC-kinase C-terminal domain is found at glutamate 343–glycine 413. Threonine 423 bears the Phosphothreonine mark. Residues leucine 434 to histidine 649 are a coiled coil. Arginine 671 is subject to Omega-N-methylarginine. 2 coiled-coil regions span residues glutamine 681 to glutamate 815 and glutamate 878 to aspartate 939. Serine 927 is subject to Phosphoserine. Position 954 is a phosphotyrosine (tyrosine 954). Over residues alanine 971–glutamate 994 the composition is skewed to polar residues. Residues alanine 971–proline 1022 are disordered. The segment at alanine 1026–cysteine 1076 adopts a Phorbol-ester/DAG-type zinc-finger fold. The PH domain occupies glycine 1096–alanine 1215. The region spanning isoleucine 1241 to asparagine 1515 is the CNH domain. In terms of domain architecture, CRIB spans isoleucine 1585–glycine 1598. The interval threonine 1616–alanine 1713 is disordered. Positions aspartate 1666 to lysine 1677 are enriched in basic and acidic residues. Phosphoserine is present on residues serine 1682, serine 1684, serine 1688, serine 1692, and serine 1695.

The protein belongs to the protein kinase superfamily. AGC Ser/Thr protein kinase family. DMPK subfamily. Homodimer and homotetramer via the coiled coil regions. Interacts tightly with GTP-bound but not GDP-bound CDC42. Interacts with TJP1; this interaction requires the presence of catalytically active CDC42. Forms a tripartite complex with MYO18A and LURAP1 with the latter acting as an adapter connecting CDC42BPB and MYO18A. LURAP1 binding results in activation of CDC42BPB by abolition of its negative autoregulation. Interacts with STRIP1, STRN3 and SIKE1. Interacts with CPNE4 (via VWFA domain). Interacts with LURAP1. Interacts (via AGC-kinase C-terminal domain) with FAM89B/LRAP25 (via LRR repeat). Forms a tripartite complex with FAM89B/LRAP25 and LIMK1. Requires Mg(2+) as cofactor. In terms of processing, proteolytically cleaved by caspases upon apoptosis induction.

The protein localises to the cytoplasm. The protein resides in the cell membrane. It is found in the cell junction. It localises to the cell projection. Its subcellular location is the lamellipodium. The enzyme catalyses L-seryl-[protein] + ATP = O-phospho-L-seryl-[protein] + ADP + H(+). The catalysed reaction is L-threonyl-[protein] + ATP = O-phospho-L-threonyl-[protein] + ADP + H(+). Maintained in an inactive, closed conformation by an interaction between the kinase domain and the negative autoregulatory C-terminal coiled-coil region. Agonist binding to the phorbol ester binding site disrupts this, releasing the kinase domain to allow N-terminus-mediated dimerization and kinase activation by transautophosphorylation. Inhibited by chelerythrine chloride. Serine/threonine-protein kinase which is an important downstream effector of CDC42 and plays a role in the regulation of cytoskeleton reorganization and cell migration. Regulates actin cytoskeletal reorganization via phosphorylation of PPP1R12C and MYL9/MLC2. In concert with MYO18A and LURAP1, is involved in modulating lamellar actomyosin retrograde flow that is crucial to cell protrusion and migration. Phosphorylates PPP1R12A. In concert with FAM89B/LRAP25 mediates the targeting of LIMK1 to the lamellipodium resulting in its activation and subsequent phosphorylation of CFL1 which is important for lamellipodial F-actin regulation. This Mus musculus (Mouse) protein is Serine/threonine-protein kinase MRCK beta.